The sequence spans 292 residues: 2-(5''-triphosphoribosyl)-3'-dephosphocoenzyme-A synthase (292 aa).

Belongs to the CitG/MdcB family.

It carries out the reaction 3'-dephospho-CoA + ATP = 2'-(5''-triphospho-alpha-D-ribosyl)-3'-dephospho-CoA + adenine. Its function is as follows. Catalyzes the formation of 2-(5''-triphosphoribosyl)-3'-dephosphocoenzyme-A, the precursor of the prosthetic group of the holo-acyl carrier protein (gamma chain) of citrate lyase, from ATP and dephospho-CoA. This is 2-(5''-triphosphoribosyl)-3'-dephosphocoenzyme-A synthase from Escherichia coli (strain UTI89 / UPEC).